The sequence spans 330 residues: Triplex capsid protein 1 (330 aa).

It belongs to the herpesviridae TRX1 protein family. In terms of assembly, interacts with TRX2, MCP and capsid vertex component 2/CVC2.

It localises to the virion. It is found in the host nucleus. Structural component of the T=16 icosahedral capsid. The capsid is composed of pentamers and hexamers of major capsid protein/MCP, which are linked together by heterotrimers called triplexes. These triplexes are formed by a single molecule of triplex protein 1/TRX1 and two copies of triplex protein 2/TRX2. Additionally, TRX1 is required for efficient transport of TRX2 to the nucleus, which is the site of capsid assembly. The polypeptide is Triplex capsid protein 1 (Saimiriine herpesvirus 2 (strain 11) (SaHV-2)).